The chain runs to 81 residues: Photosystem I iron-sulfur center (81 aa).

2 4Fe-4S ferredoxin-type domains span residues 2–31 (SHSVKIYDTCIGCTQCVRACPTDVLEMIPW) and 39–68 (IAPAPRTEDCVGCKRCESACPTDFLSVRVY). [4Fe-4S] cluster-binding residues include Cys11, Cys14, Cys17, Cys21, Cys48, Cys51, Cys54, and Cys58.

In terms of assembly, the eukaryotic PSI reaction center is composed of at least 11 subunits. [4Fe-4S] cluster is required as a cofactor.

The protein localises to the plastid. The protein resides in the chloroplast thylakoid membrane. It catalyses the reaction reduced [plastocyanin] + hnu + oxidized [2Fe-2S]-[ferredoxin] = oxidized [plastocyanin] + reduced [2Fe-2S]-[ferredoxin]. In terms of biological role, apoprotein for the two 4Fe-4S centers FA and FB of photosystem I (PSI); essential for photochemical activity. FB is the terminal electron acceptor of PSI, donating electrons to ferredoxin. The C-terminus interacts with PsaA/B/D and helps assemble the protein into the PSI complex. Required for binding of PsaD and PsaE to PSI. PSI is a plastocyanin-ferredoxin oxidoreductase, converting photonic excitation into a charge separation, which transfers an electron from the donor P700 chlorophyll pair to the spectroscopically characterized acceptors A0, A1, FX, FA and FB in turn. This is Photosystem I iron-sulfur center from Drimys granadensis.